The sequence spans 78 residues: ATP synthase subunit c (78 aa).

2 consecutive transmembrane segments (helical) span residues 9–29 and 56–76; these read AFIG…GQGW and AAVT…LVFV.

It belongs to the ATPase C chain family. F-type ATPases have 2 components, F(1) - the catalytic core - and F(0) - the membrane proton channel. F(1) has five subunits: alpha(3), beta(3), gamma(1), delta(1), epsilon(1). F(0) has three main subunits: a(1), b(2) and c(10-14). The alpha and beta chains form an alternating ring which encloses part of the gamma chain. F(1) is attached to F(0) by a central stalk formed by the gamma and epsilon chains, while a peripheral stalk is formed by the delta and b chains.

It is found in the cell membrane. F(1)F(0) ATP synthase produces ATP from ADP in the presence of a proton or sodium gradient. F-type ATPases consist of two structural domains, F(1) containing the extramembraneous catalytic core and F(0) containing the membrane proton channel, linked together by a central stalk and a peripheral stalk. During catalysis, ATP synthesis in the catalytic domain of F(1) is coupled via a rotary mechanism of the central stalk subunits to proton translocation. In terms of biological role, key component of the F(0) channel; it plays a direct role in translocation across the membrane. A homomeric c-ring of between 10-14 subunits forms the central stalk rotor element with the F(1) delta and epsilon subunits. The polypeptide is ATP synthase subunit c (Malacoplasma penetrans (strain HF-2) (Mycoplasma penetrans)).